The following is a 116-amino-acid chain: Iron-sulfur cluster insertion protein ErpA (116 aa).

Iron-sulfur cluster is bound by residues cysteine 44, cysteine 108, and cysteine 110.

It belongs to the HesB/IscA family. In terms of assembly, homodimer. Iron-sulfur cluster is required as a cofactor.

In terms of biological role, required for insertion of 4Fe-4S clusters for at least IspG. The chain is Iron-sulfur cluster insertion protein ErpA from Aeromonas salmonicida (strain A449).